A 378-amino-acid polypeptide reads, in one-letter code: Glycerate kinase (378 aa).

The protein belongs to the glycerate kinase type-1 family.

The catalysed reaction is (R)-glycerate + ATP = (2R)-3-phosphoglycerate + ADP + H(+). This Haemophilus influenzae (strain ATCC 51907 / DSM 11121 / KW20 / Rd) protein is Glycerate kinase (glxK).